Here is a 352-residue protein sequence, read N- to C-terminus: Homeobox protein Mohawk (352 aa).

Residues 19-54 (GASERERGGRPYSGVLDSPHARPEVGIPDGPPLKDN) form a disordered region. Residues 71–132 (VRHKRQALQD…NARRRLKNTV (62 aa)) constitute a DNA-binding region (homeobox; TALE-type). 2 disordered regions span residues 159–189 (VSSD…VHHP) and 245–301 (TRQR…PSKD).

The protein belongs to the TALE/IRO homeobox family.

The protein resides in the nucleus. In terms of biological role, may act as a morphogenetic regulator of cell adhesion. This is Homeobox protein Mohawk (MKX) from Homo sapiens (Human).